The primary structure comprises 474 residues: 3-isopropylmalate dehydratase large subunit (474 aa).

[4Fe-4S] cluster-binding residues include Cys-353, Cys-414, and Cys-417.

The protein belongs to the aconitase/IPM isomerase family. LeuC type 1 subfamily. Heterodimer of LeuC and LeuD. Requires [4Fe-4S] cluster as cofactor.

The catalysed reaction is (2R,3S)-3-isopropylmalate = (2S)-2-isopropylmalate. The protein operates within amino-acid biosynthesis; L-leucine biosynthesis; L-leucine from 3-methyl-2-oxobutanoate: step 2/4. Catalyzes the isomerization between 2-isopropylmalate and 3-isopropylmalate, via the formation of 2-isopropylmaleate. The chain is 3-isopropylmalate dehydratase large subunit from Teredinibacter turnerae (strain ATCC 39867 / T7901).